A 500-amino-acid chain; its full sequence is Pentatricopeptide repeat-containing protein At1g06580 (500 aa).

PPR repeat units follow at residues S78–H112, D113–P147, S148–P182, N183–P217, D218–P252, D253–P287, N288–P322, N323–G357, D358–P392, D393–V427, G428–P462, and D463–P498.

It belongs to the PPR family. P subfamily.

In Arabidopsis thaliana (Mouse-ear cress), this protein is Pentatricopeptide repeat-containing protein At1g06580.